Reading from the N-terminus, the 311-residue chain is 4-hydroxy-tetrahydrodipicolinate synthase (311 aa).

Threonine 51 contributes to the pyruvate binding site. Catalysis depends on tyrosine 140, which acts as the Proton donor/acceptor. Lysine 168 serves as the catalytic Schiff-base intermediate with substrate. Isoleucine 209 is a binding site for pyruvate.

This sequence belongs to the DapA family. Homotetramer; dimer of dimers.

Its subcellular location is the cytoplasm. It catalyses the reaction L-aspartate 4-semialdehyde + pyruvate = (2S,4S)-4-hydroxy-2,3,4,5-tetrahydrodipicolinate + H2O + H(+). It functions in the pathway amino-acid biosynthesis; L-lysine biosynthesis via DAP pathway; (S)-tetrahydrodipicolinate from L-aspartate: step 3/4. Functionally, catalyzes the condensation of (S)-aspartate-beta-semialdehyde [(S)-ASA] and pyruvate to 4-hydroxy-tetrahydrodipicolinate (HTPA). The polypeptide is 4-hydroxy-tetrahydrodipicolinate synthase (Streptococcus pneumoniae (strain 70585)).